The following is a 601-amino-acid chain: tRNA 5-methylaminomethyl-2-thiouridine biosynthesis bifunctional protein MnmC (601 aa).

Residues 1 to 237 (MSDPTASPLI…KKQRLEAVAP (237 aa)) form a tRNA (mnm(5)s(2)U34)-methyltransferase region. Positions 252 to 601 (IGGGIAGAAM…FSSRVATGAV (350 aa)) are FAD-dependent cmnm(5)s(2)U34 oxidoreductase.

This sequence in the N-terminal section; belongs to the methyltransferase superfamily. tRNA (mnm(5)s(2)U34)-methyltransferase family. It in the C-terminal section; belongs to the DAO family. The cofactor is FAD.

The protein resides in the cytoplasm. The catalysed reaction is 5-aminomethyl-2-thiouridine(34) in tRNA + S-adenosyl-L-methionine = 5-methylaminomethyl-2-thiouridine(34) in tRNA + S-adenosyl-L-homocysteine + H(+). Functionally, catalyzes the last two steps in the biosynthesis of 5-methylaminomethyl-2-thiouridine (mnm(5)s(2)U) at the wobble position (U34) in tRNA. Catalyzes the FAD-dependent demodification of cmnm(5)s(2)U34 to nm(5)s(2)U34, followed by the transfer of a methyl group from S-adenosyl-L-methionine to nm(5)s(2)U34, to form mnm(5)s(2)U34. The sequence is that of tRNA 5-methylaminomethyl-2-thiouridine biosynthesis bifunctional protein MnmC from Caulobacter sp. (strain K31).